A 364-amino-acid polypeptide reads, in one-letter code: DNA replication and repair protein RecF (364 aa).

Residue 30–37 coordinates ATP; sequence GNNAQGKT.

The protein belongs to the RecF family.

Its subcellular location is the cytoplasm. Its function is as follows. The RecF protein is involved in DNA metabolism; it is required for DNA replication and normal SOS inducibility. RecF binds preferentially to single-stranded, linear DNA. It also seems to bind ATP. The chain is DNA replication and repair protein RecF from Clostridium botulinum (strain 657 / Type Ba4).